The sequence spans 342 residues: AA9 family lytic polysaccharide monooxygenase AA9-X282 (342 aa).

An N-terminal signal peptide occupies residues 1 to 18 (MKSFASLLFLAATAAAHA). His-17 is a Cu(2+) binding site. Phosphothreonine is present on residues Thr-19 and Thr-57. A Phosphoserine modification is found at Ser-59. Cysteines 63 and 181 form a disulfide. His-93 contacts Cu(2+). O2 contacts are provided by His-167 and Gln-176. Tyr-178 is a Cu(2+) binding site. N-linked (GlcNAc...) asparagine glycosylation is present at Asn-189. Residues 233–263 (SPATVANTPYPTTATWNTALQPTTVPTVTPP) form an X282 extension region. Residues 281 to 302 (VTSQPPVPPTTQQPPVVTPTAP) form a disordered region. A compositionally biased stretch (pro residues) spans 285-302 (PPVPPTTQQPPVVTPTAP). The region spanning 306-342 (PLQTQYGQCGGQGWNGPTQCQPPYTCTASNQWYHQCL) is the CBM1 domain.

Belongs to the polysaccharide monooxygenase AA9 family. Cu(2+) serves as cofactor.

The protein resides in the secreted. The catalysed reaction is [(1-&gt;4)-beta-D-glucosyl]n+m + reduced acceptor + O2 = 4-dehydro-beta-D-glucosyl-[(1-&gt;4)-beta-D-glucosyl]n-1 + [(1-&gt;4)-beta-D-glucosyl]m + acceptor + H2O.. In terms of biological role, lytic polysaccharide monooxygenase (LPMO) that depolymerizes crystalline and amorphous polysaccharides via the oxidation of scissile alpha- or beta-(1-4)-glycosidic bonds, yielding C1 oxidation products. Catalysis by LPMOs requires the reduction of the active-site copper from Cu(II) to Cu(I) by a reducing agent and H(2)O(2) or O(2) as a cosubstrate. Shows only weak binding properties to cellulose, and low cellulolytic oxidative activity which questions the involvement of X282 extension-containing AA9 proteins in the degradation of plant cell wall and opens new avenues as to the divergence of function of some AA9 members. This is AA9 family lytic polysaccharide monooxygenase AA9-X282 from Coprinopsis cinerea (strain Okayama-7 / 130 / ATCC MYA-4618 / FGSC 9003) (Inky cap fungus).